A 318-amino-acid polypeptide reads, in one-letter code: Taste receptor type 2 member 60 (318 aa).

At methionine 1 to valine 7 the chain is on the extracellular side. Residues leucine 8–arginine 28 traverse the membrane as a helical segment. Topologically, residues leucine 29 to alanine 40 are cytoplasmic. A helical transmembrane segment spans residues alanine 41–serine 61. At leucine 62–proline 88 the chain is on the extracellular side. Residues tyrosine 89–tryptophan 109 form a helical membrane-spanning segment. Residues phenylalanine 110–proline 128 are Cytoplasmic-facing. The helical transmembrane segment at valine 129–valine 149 threads the bilayer. The Extracellular portion of the chain corresponds to glycine 150–asparagine 183. Asparagine 179 is a glycosylation site (N-linked (GlcNAc...) asparagine). A helical membrane pass occupies residues serine 184–methionine 204. Residues proline 205–phenylalanine 234 lie on the Cytoplasmic side of the membrane. The helical transmembrane segment at arginine 235–leucine 255 threads the bilayer. Topologically, residues phenylalanine 256–valine 264 are extracellular. The chain crosses the membrane as a helical span at residues phenylalanine 265 to isoleucine 285. The Cytoplasmic segment spans residues tyrosine 286–proline 318.

This sequence belongs to the G-protein coupled receptor T2R family.

Its subcellular location is the membrane. In terms of biological role, receptor that may play a role in the perception of bitterness and is gustducin-linked. May play a role in sensing the chemical composition of the gastrointestinal content. The activity of this receptor may stimulate alpha gustducin, mediate PLC-beta-2 activation and lead to the gating of TRPM5. The sequence is that of Taste receptor type 2 member 60 (TAS2R60) from Gorilla gorilla gorilla (Western lowland gorilla).